We begin with the raw amino-acid sequence, 204 residues long: Peptide deformylase (204 aa).

Positions 131 and 174 each coordinate Fe cation. Residue Glu-175 is part of the active site. A Fe cation-binding site is contributed by His-178.

The protein belongs to the polypeptide deformylase family. Fe(2+) is required as a cofactor.

It catalyses the reaction N-terminal N-formyl-L-methionyl-[peptide] + H2O = N-terminal L-methionyl-[peptide] + formate. Functionally, removes the formyl group from the N-terminal Met of newly synthesized proteins. Requires at least a dipeptide for an efficient rate of reaction. N-terminal L-methionine is a prerequisite for activity but the enzyme has broad specificity at other positions. The sequence is that of Peptide deformylase from Streptococcus gordonii (strain Challis / ATCC 35105 / BCRC 15272 / CH1 / DL1 / V288).